Consider the following 325-residue polypeptide: Eukaryotic translation initiation factor 3 subunit I (325 aa).

WD repeat units lie at residues 8 to 47, 50 to 89, 144 to 183, 186 to 225, and 283 to 324; these read GHERSITQIKYNRDGDLLFTVAKDPVVNVWYSVNGERLGT, GHTGAVWCVDVDWDTRHVLSGSADNSCRLWDCETGKQLAL, CSESKITSAVWGPLGENIIAGHENGELNQYSAKSGEIVNS, EHSKQINDIQTSRDMTMFVTASKDCTSKLFDSTSLEHQKT, and GHFG…FEFE.

This sequence belongs to the eIF-3 subunit I family. In terms of assembly, component of the eukaryotic translation initiation factor 3 (eIF-3) complex, which is composed of 13 subunits: eif3a, eif3b, eif3c, eif3d, eif3e, eif3f, eif3g, eif3h, eif3i, eif3j, eif3k, eif3l and eif3m.

It is found in the cytoplasm. Its function is as follows. Component of the eukaryotic translation initiation factor 3 (eIF-3) complex, which is involved in protein synthesis of a specialized repertoire of mRNAs and, together with other initiation factors, stimulates binding of mRNA and methionyl-tRNAi to the 40S ribosome. The eIF-3 complex specifically targets and initiates translation of a subset of mRNAs involved in cell proliferation. The protein is Eukaryotic translation initiation factor 3 subunit I (eif3i) of Xenopus tropicalis (Western clawed frog).